A 145-amino-acid polypeptide reads, in one-letter code: UPF0735 ACT domain-containing protein CLH_2637 (145 aa).

The region spanning 69–144 is the ACT domain; that stretch reads TFNLIVKDQT…YVEKIEFVAM (76 aa).

It belongs to the UPF0735 family.

The sequence is that of UPF0735 ACT domain-containing protein CLH_2637 from Clostridium botulinum (strain Alaska E43 / Type E3).